The chain runs to 188 residues: Putative ankyrin repeat protein FPV230 (188 aa).

ANK repeat units lie at residues 2–31 (ENEL…NPNA), 36–65 (KYMI…DANV), 135–164 (LGST…DINI), and 168–187 (NNNT…YLKC).

This chain is Putative ankyrin repeat protein FPV230, found in Vertebrata (FPV).